We begin with the raw amino-acid sequence, 1159 residues long: PAN2-PAN3 deadenylation complex catalytic subunit pan2 (1159 aa).

One copy of the WD repeat lies at 276-315 (ANVSFMLGIDISPSGEALAINDAECMVHLWGSPAKIHFNE). The interval 316–451 (MSKEVELADV…GAKLNGEAED (136 aa)) is linker. The USP domain maps to 452 to 821 (DPLLKYSNVE…VPCVLAFQVK (370 aa)). Residues 872–1048 (LDTEFVDLEK…IEDARMALRL (177 aa)) form the Exonuclease domain. A divalent metal cation contacts are provided by Asp873, Glu875, Asp982, and Asp1041. The tract at residues 1094–1159 (TAVTMQNTNS…GDFFGGSPLK (66 aa)) is disordered. Polar residues predominate over residues 1096–1106 (VTMQNTNSGRN). Residues 1107–1128 (TPTVPDAAGAPAVPASAPTTPG) are compositionally biased toward low complexity. Residues 1143–1153 (TFSGPGAGDFF) are compositionally biased toward gly residues.

The protein belongs to the peptidase C19 family. PAN2 subfamily. In terms of assembly, forms a heterotrimer with an asymmetric homodimer of the regulatory subunit pan3 to form the poly(A)-nuclease (PAN) deadenylation complex. Requires a divalent metal cation as cofactor.

It is found in the cytoplasm. The catalysed reaction is Exonucleolytic cleavage of poly(A) to 5'-AMP.. Its activity is regulated as follows. Positively regulated by the regulatory subunit pan3. Catalytic subunit of the poly(A)-nuclease (PAN) deadenylation complex, one of two cytoplasmic mRNA deadenylases involved in mRNA turnover. PAN specifically shortens poly(A) tails of RNA and the activity is stimulated by poly(A)-binding protein pab1. PAN deadenylation is followed by rapid degradation of the shortened mRNA tails by the CCR4-NOT complex. Deadenylated mRNAs are then degraded by two alternative mechanisms, namely exosome-mediated 3'-5' exonucleolytic degradation, or deadenylation-dependent mRNA decaping and subsequent 5'-3' exonucleolytic degradation by xrn1. May also be involved in post-transcriptional maturation of mRNA poly(A) tails. In Aspergillus terreus (strain NIH 2624 / FGSC A1156), this protein is PAN2-PAN3 deadenylation complex catalytic subunit pan2.